The primary structure comprises 201 residues: MDTKPPRQRLIGLTGGIATGKSTVTDYLQQKYSVPILDADLYARQAVEPGSEILVAIARRYGPEILDQQGQLKRQALGEIVFNNAEEKQWLESQIHPFVGRCFRSALAQLKQEQTVLLSIPLLFEAQLTDWVTEIWVVTCGPQQQVERLIKRNGLTEAEALARITSQMPLAEKVALADVVLDNSGQIADLEPQIIKAWHHR.

Residues 10–201 (LIGLTGGIAT…PQIIKAWHHR (192 aa)) enclose the DPCK domain. 18-23 (ATGKST) is an ATP binding site.

This sequence belongs to the CoaE family.

It localises to the cytoplasm. The enzyme catalyses 3'-dephospho-CoA + ATP = ADP + CoA + H(+). Its pathway is cofactor biosynthesis; coenzyme A biosynthesis; CoA from (R)-pantothenate: step 5/5. Its function is as follows. Catalyzes the phosphorylation of the 3'-hydroxyl group of dephosphocoenzyme A to form coenzyme A. In Synechocystis sp. (strain ATCC 27184 / PCC 6803 / Kazusa), this protein is Dephospho-CoA kinase.